The primary structure comprises 576 residues: 5'-nucleotidase (576 aa).

An N-terminal signal peptide occupies residues 1-28 (MRPAAATAPKWLLLALSALLPLWPTAKS). Zn(2+) is bound by residues Asp-38 and His-40. Cys-53 and Cys-59 are disulfide-bonded. N-linked (GlcNAc...) asparagine glycosylation occurs at Asn-55. The Zn(2+) site is built by Asp-87, Asn-119, His-222, and His-245. Asn-313, Asn-335, and Asn-349 each carry an N-linked (GlcNAc...) asparagine glycan. 2 disulfide bridges follow: Cys-355–Cys-360 and Cys-367–Cys-389. Arg-356 contacts AMP. Arg-356 contributes to the IMP binding site. AMP is bound by residues Asn-392 and Arg-397. Residues Asn-392 and Arg-397 each coordinate IMP. N-linked (GlcNAc...) asparagine glycosylation is present at Asn-405. Phe-419 contacts AMP. Residue Phe-419 coordinates IMP. An intrachain disulfide couples Cys-478 to Cys-481. Residues Tyr-502 and Asp-508 each contribute to the AMP site. IMP contacts are provided by Tyr-502 and Asp-508. Ser-551 carries GPI-anchor amidated serine lipidation. The propeptide at 552-576 (AASHYQGSFPLIILSFWAVILVLYQ) is removed in mature form.

Belongs to the 5'-nucleotidase family. As to quaternary structure, homodimer. It depends on Zn(2+) as a cofactor. Expressed in the brain.

It localises to the cell membrane. The catalysed reaction is a ribonucleoside 5'-phosphate + H2O = a ribonucleoside + phosphate. It catalyses the reaction a 2'-deoxyribonucleoside 5'-phosphate + H2O = a 2'-deoxyribonucleoside + phosphate. The enzyme catalyses dTMP + H2O = thymidine + phosphate. It carries out the reaction CMP + H2O = cytidine + phosphate. The catalysed reaction is IMP + H2O = inosine + phosphate. It catalyses the reaction AMP + H2O = adenosine + phosphate. The enzyme catalyses GMP + H2O = guanosine + phosphate. It carries out the reaction UMP + H2O = uridine + phosphate. The catalysed reaction is dAMP + H2O = 2'-deoxyadenosine + phosphate. It catalyses the reaction dCMP + H2O = 2'-deoxycytidine + phosphate. Functionally, catalyzes the hydrolysis of nucleotide monophosphates, releasing inorganic phosphate and the corresponding nucleoside. AMP is the preferred substrate but can also hydrolyze CMP and GMP. Shows a preference for ribonucleotide monophosphates over their equivalent deoxyribose forms. Other substrates include IMP, UMP, dAMP, dCMP, dTMP, NAD and NMN. This chain is 5'-nucleotidase (Nt5e), found in Rattus norvegicus (Rat).